A 185-amino-acid polypeptide reads, in one-letter code: Ribosome-recycling factor (185 aa).

A compositionally biased stretch (basic and acidic residues) spans 142 to 164 (IKKDGDAGEDDVTRAEKDLDKST). Positions 142-173 (IKKDGDAGEDDVTRAEKDLDKSTHQYTSQVDD) are disordered.

The protein belongs to the RRF family.

The protein localises to the cytoplasm. In terms of biological role, responsible for the release of ribosomes from messenger RNA at the termination of protein biosynthesis. May increase the efficiency of translation by recycling ribosomes from one round of translation to another. The polypeptide is Ribosome-recycling factor (Mycolicibacterium gilvum (strain PYR-GCK) (Mycobacterium gilvum (strain PYR-GCK))).